The chain runs to 1035 residues: DNA polymerase catalytic subunit (1035 aa).

The protein belongs to the DNA polymerase type-B family.

It is found in the host nucleus. The enzyme catalyses DNA(n) + a 2'-deoxyribonucleoside 5'-triphosphate = DNA(n+1) + diphosphate. This is DNA polymerase catalytic subunit (UL54) from Macaca mulatta (Rhesus macaque).